Consider the following 163-residue polypeptide: uncharacterized protein (163 aa).

The next 4 membrane-spanning stretches (helical) occupy residues 19 to 39, 63 to 83, 87 to 107, and 119 to 139; these read GPPSVICIRLLVGLVFLSEGI, FFADLDGVVEIVCGTLVLLGL, VAAVPLLIDMVGAIVLTKLRA, and FWGMAHAARTDLSMLLGLIFL.

Belongs to the DoxX family.

The protein resides in the cell membrane. This is an uncharacterized protein from Mycobacterium tuberculosis (strain ATCC 25618 / H37Rv).